We begin with the raw amino-acid sequence, 344 residues long: Selenide, water dikinase (344 aa).

The active site involves C16. ATP-binding positions include K19 and 47 to 49 (SRD). Residue D50 participates in Mg(2+) binding. ATP is bound by residues D67, D90, and 138–140 (GHS). Mg(2+) is bound at residue D90. D226 serves as a coordination point for Mg(2+).

Belongs to the selenophosphate synthase 1 family. Class I subfamily. In terms of assembly, homodimer. It depends on Mg(2+) as a cofactor.

It carries out the reaction hydrogenselenide + ATP + H2O = selenophosphate + AMP + phosphate + 2 H(+). Its function is as follows. Synthesizes selenophosphate from selenide and ATP. The protein is Selenide, water dikinase of Bordetella bronchiseptica (strain ATCC BAA-588 / NCTC 13252 / RB50) (Alcaligenes bronchisepticus).